The following is an 88-amino-acid chain: Small ribosomal subunit protein bS20 (88 aa).

The protein belongs to the bacterial ribosomal protein bS20 family.

Its function is as follows. Binds directly to 16S ribosomal RNA. The sequence is that of Small ribosomal subunit protein bS20 from Bartonella quintana (strain Toulouse) (Rochalimaea quintana).